Reading from the N-terminus, the 358-residue chain is Vanillin synthase (358 aa).

A signal peptide spans 1 to 21 (MARLLLLLVGVLIACAAGARA). The propeptide at 22 to 140 (GSEFLAEDNP…RGNHKLTSAI (119 aa)) is activation peptide. N-linked (GlcNAc...) asparagine glycosylation is present at N125. Intrachain disulfides connect C162–C205 and C196–C238. C165 is a catalytic residue. N-linked (GlcNAc...) asparagine glycosylation is present at N254. A disulfide bridge links C296 with C346. Catalysis depends on residues H305 and N325.

It belongs to the peptidase C1 family.

The catalysed reaction is (E)-ferulate + H2O = vanillin + acetate. It carries out the reaction 4-O-beta-D-glucosyl-trans-ferulate + H2O = 4-O-beta-D-glucosyl-vanillin + acetate. Its pathway is aromatic compound metabolism; phenylpropanoid biosynthesis. In terms of biological role, involved in the biosynthesis of vanillin and derivative natural products. Catalyzes the double carbon bond cleavage of ferulic acid to vanillin and of respective glucosides. This is Vanillin synthase from Glechoma hederacea (Ground-ivy).